The chain runs to 668 residues: Echinocandin B biosynthetic cluster protein J (668 aa).

5 disordered regions span residues 1-20 (MHFA…DQSL), 92-113 (YTPP…PPTP), 224-322 (PLDH…QSAD), 330-349 (EVAE…SIPT), and 483-506 (NCSS…PPLK). Over residues 96 to 106 (SLDSRSSATPP) the composition is skewed to polar residues. Pro residues predominate over residues 264–275 (NPEPGTPTPPSP). Over residues 311–322 (YRSTPSPCQSAD) the composition is skewed to polar residues. Positions 484-494 (CSSSSCSSSAS) are enriched in low complexity. Residues 495-505 (KKNEEKREPPL) are compositionally biased toward basic and acidic residues.

Its pathway is antifungal biosynthesis. Functionally, part of the gene cluster that mediates the biosynthesis of echinocandin B, a fungal lipidated cyclic hexapeptide that acts as an antifungal agent. Linoleoyl-AMP, produced by the fatty-acyl-AMP ligase ecdI, is transferred to the initiation carrier domain (T0) of ecdA. The linoleoyl-S-phosphopantetheinyl-T0 is sequentially extended with L-ornithine, L-threonine, L-proline, L-homotyrosine, L-threonine, and 4R-methyl-L-proline to form the linear hexapeptide. Thereafter, the terminal condensation (C7) performs macrocyclization of the NRPS product and the cyclic scaffold is released from ecdA. All six of the amino acid residues are hydroxylated, including 4R,5R-dihydroxy-L-ornithine, 4R-hydroxyl-L-proline, 3S,4S-dihydroxy-L-homotyrosine, and 3S-hydroxyl-4S-methyl-L-prolin. In the pathway, all the hydroxylation reactions are proposed to occur following completion of the cyclic peptide, so the unhydroxylated precursor produced by ecdA will undergo six rounds of hydroxylation. Five hydroxylase genes (ecdG, ecdH, ecdK, htyE and htyF) are embedded within the echinocandin B (ecd) and L-homotyrosine (hty) clusters. This Aspergillus rugulosus (Emericella rugulosa) protein is Echinocandin B biosynthetic cluster protein J.